A 598-amino-acid chain; its full sequence is Arginine--tRNA ligase (598 aa).

Residues alanine 140–histidine 150 carry the 'HIGH' region motif.

It belongs to the class-I aminoacyl-tRNA synthetase family. In terms of assembly, monomer.

The protein localises to the cytoplasm. The catalysed reaction is tRNA(Arg) + L-arginine + ATP = L-arginyl-tRNA(Arg) + AMP + diphosphate. The protein is Arginine--tRNA ligase of Synechococcus sp. (strain JA-3-3Ab) (Cyanobacteria bacterium Yellowstone A-Prime).